The sequence spans 142 residues: Large ribosomal subunit protein bL27m (142 aa).

Residues 27 to 48 (TKKSAGSTKNGRTSQPKNLGLK) form a disordered region. The segment covering 30-43 (SAGSTKNGRTSQPK) has biased composition (polar residues).

The protein belongs to the bacterial ribosomal protein bL27 family.

The protein resides in the mitochondrion. In Dictyostelium discoideum (Social amoeba), this protein is Large ribosomal subunit protein bL27m (mrpl27).